A 150-amino-acid polypeptide reads, in one-letter code: Lipoprotein signal peptidase (150 aa).

A run of 3 helical transmembrane segments spans residues 5-25 (LSLV…NWIV), 59-79 (QQWF…WFLW), and 83-103 (AQNW…GNFI). Active-site residues include Asp-113 and Asp-129. A helical transmembrane segment spans residues 124–144 (IFNIADILLSVGFVLLFIAIL).

The protein belongs to the peptidase A8 family.

It is found in the cell membrane. The catalysed reaction is Release of signal peptides from bacterial membrane prolipoproteins. Hydrolyzes -Xaa-Yaa-Zaa-|-(S,diacylglyceryl)Cys-, in which Xaa is hydrophobic (preferably Leu), and Yaa (Ala or Ser) and Zaa (Gly or Ala) have small, neutral side chains.. The protein operates within protein modification; lipoprotein biosynthesis (signal peptide cleavage). This protein specifically catalyzes the removal of signal peptides from prolipoproteins. This chain is Lipoprotein signal peptidase, found in Lactococcus lactis subsp. lactis (strain IL1403) (Streptococcus lactis).